Here is a 1010-residue protein sequence, read N- to C-terminus: Eukaryotic translation initiation factor 4E transporter (1010 aa).

The YXXXXLphi motif motif lies at 10–16 (YSKVDLL). Disordered regions lie at residues 154 to 182 (GSNSEESNEGINTCASKGKAASSPSRKGS), 196 to 277 (PDHD…RLVE), 289 to 320 (YDSKKSFDRQGINNRRISGKEPFSTQSRSKRG), 354 to 391 (NEERSVTEDKNNQIQQLDKNLDAQASKDEASMRNSNDS), and 921 to 960 (QSNPQMSPPVPGFSDSSDSGNVIKANSLTSPSYQRDERIS). The span at 201-211 (CMSSSPTFSTS) shows a compositional bias: polar residues. Positions 227–247 (DNWDYKNEKTVEASIENEKET) are enriched in basic and acidic residues. Over residues 248–263 (SPNGSGSTSSLNQHNQ) the composition is skewed to polar residues. Composition is skewed to basic and acidic residues over residues 354–364 (NEERSVTEDKN) and 372–384 (KNLDAQASKDEAS). The segment covering 934–953 (SDSSDSGNVIKANSLTSPSY) has biased composition (polar residues).

Belongs to the 4E-T/EIF4E-T family. Interacts (via YXXXXLphi motif) with eIF4E1. Interacts with DDX6/me31B. In terms of tissue distribution, expressed in all larval and adult organs and tissues, with highest levels in the ovary.

The protein resides in the cytoplasm. The protein localises to the P-body. It localises to the nucleus. In terms of biological role, eIF4E1-binding protein that regulates translation and stability of mRNAs in processing bodies (P-bodies). Probably plays a role in P-bodies to coordinate the storage of translationally inactive mRNAs in the cytoplasm and prevent their degradation. Acts as a binding platform for multiple RNA-binding proteins. Required for the formation of P-bodies. The chain is Eukaryotic translation initiation factor 4E transporter from Drosophila melanogaster (Fruit fly).